Consider the following 318-residue polypeptide: MFYQSSSSLTQILHSFCGNTEMETPYPKLIDPSKTRIGWIGIGIMGSAMVSHIIAAGYSVTVYARDLRKTKDLQTKGARIANSPKELAEMSDVVFTIVGNFNDVRSLLLGDDGVLSGLTPGGVTVDMTSSKPGLAREIHAEARRRNCWAVDAPVSGGDAGAREGTLGIFAGGDSEIVEWLSPVMKNIGTVTYMGEAGSGQSCKIGNQIAGASNLVGLAEGIVFAEKAGLDTVKWLEAVKDGAAGSAVMRLFGEMIVKRDYRATGFAEYMVKDLGMAAEAAMPGAALSKQLFTGMVANGDGKLGIQGVVSVIRRLNGIS.

NAD(+)-binding positions include 35 to 64 (TRIG…TVYA) and S129. The active site involves K203. Residue K271 coordinates NAD(+).

Belongs to the HIBADH-related family. 3-hydroxyisobutyrate dehydrogenase subfamily.

The protein localises to the mitochondrion. The enzyme catalyses 3-hydroxy-2-methylpropanoate + NAD(+) = 2-methyl-3-oxopropanoate + NADH + H(+). The protein operates within amino-acid degradation; L-valine degradation. This chain is Probable 3-hydroxyisobutyrate dehydrogenase-like 3, mitochondrial, found in Arabidopsis thaliana (Mouse-ear cress).